The chain runs to 200 residues: Probable nicotinate-nucleotide adenylyltransferase (200 aa).

The protein belongs to the NadD family.

The enzyme catalyses nicotinate beta-D-ribonucleotide + ATP + H(+) = deamido-NAD(+) + diphosphate. The protein operates within cofactor biosynthesis; NAD(+) biosynthesis; deamido-NAD(+) from nicotinate D-ribonucleotide: step 1/1. Catalyzes the reversible adenylation of nicotinate mononucleotide (NaMN) to nicotinic acid adenine dinucleotide (NaAD). The protein is Probable nicotinate-nucleotide adenylyltransferase of Clostridium acetobutylicum (strain ATCC 824 / DSM 792 / JCM 1419 / IAM 19013 / LMG 5710 / NBRC 13948 / NRRL B-527 / VKM B-1787 / 2291 / W).